The chain runs to 282 residues: NADPH-dependent 7-cyano-7-deazaguanine reductase (282 aa).

Position 88-90 (88-90) interacts with substrate; it reads IES. 90 to 91 provides a ligand contact to NADPH; the sequence is SK. Cys-190 acts as the Thioimide intermediate in catalysis. Asp-197 (proton donor) is an active-site residue. 229–230 serves as a coordination point for substrate; the sequence is HE. 258–259 provides a ligand contact to NADPH; the sequence is RG.

It belongs to the GTP cyclohydrolase I family. QueF type 2 subfamily. In terms of assembly, homodimer.

It localises to the cytoplasm. The enzyme catalyses 7-aminomethyl-7-carbaguanine + 2 NADP(+) = 7-cyano-7-deazaguanine + 2 NADPH + 3 H(+). The protein operates within tRNA modification; tRNA-queuosine biosynthesis. Catalyzes the NADPH-dependent reduction of 7-cyano-7-deazaguanine (preQ0) to 7-aminomethyl-7-deazaguanine (preQ1). In Salmonella schwarzengrund (strain CVM19633), this protein is NADPH-dependent 7-cyano-7-deazaguanine reductase.